The primary structure comprises 98 residues: NADH-ubiquinone oxidoreductase chain 4L (98 aa).

A run of 3 helical transmembrane segments spans residues 1 to 21, 29 to 49, and 61 to 81; these read MHYIYINIIIAFSMSLLGALL, SLLCLEGMMLALFVLSTLIAL, and IILLVFAACEAAIGLSLLVMV.

This sequence belongs to the complex I subunit 4L family. In terms of assembly, core subunit of respiratory chain NADH dehydrogenase (Complex I) which is composed of 45 different subunits.

The protein resides in the mitochondrion inner membrane. It catalyses the reaction a ubiquinone + NADH + 5 H(+)(in) = a ubiquinol + NAD(+) + 4 H(+)(out). Core subunit of the mitochondrial membrane respiratory chain NADH dehydrogenase (Complex I) which catalyzes electron transfer from NADH through the respiratory chain, using ubiquinone as an electron acceptor. Part of the enzyme membrane arm which is embedded in the lipid bilayer and involved in proton translocation. The sequence is that of NADH-ubiquinone oxidoreductase chain 4L (MT-ND4L) from Procavia capensis (Rock hyrax).